The primary structure comprises 218 residues: Ribose-5-phosphate isomerase A (218 aa).

Residues 28–31 (TGST), 81–84 (DGAD), and 94–97 (KGGG) each bind substrate. Glu103 (proton acceptor) is an active-site residue. Lys121 is a substrate binding site.

It belongs to the ribose 5-phosphate isomerase family. As to quaternary structure, homodimer.

The catalysed reaction is aldehydo-D-ribose 5-phosphate = D-ribulose 5-phosphate. It participates in carbohydrate degradation; pentose phosphate pathway; D-ribose 5-phosphate from D-ribulose 5-phosphate (non-oxidative stage): step 1/1. Functionally, catalyzes the reversible conversion of ribose-5-phosphate to ribulose 5-phosphate. The protein is Ribose-5-phosphate isomerase A of Pseudoalteromonas atlantica (strain T6c / ATCC BAA-1087).